A 400-amino-acid chain; its full sequence is Exodeoxyribonuclease 7 large subunit (400 aa).

This sequence belongs to the XseA family. As to quaternary structure, heterooligomer composed of large and small subunits.

It localises to the cytoplasm. The catalysed reaction is Exonucleolytic cleavage in either 5'- to 3'- or 3'- to 5'-direction to yield nucleoside 5'-phosphates.. Bidirectionally degrades single-stranded DNA into large acid-insoluble oligonucleotides, which are then degraded further into small acid-soluble oligonucleotides. In Clostridium perfringens (strain SM101 / Type A), this protein is Exodeoxyribonuclease 7 large subunit.